A 259-amino-acid polypeptide reads, in one-letter code: UPF0014 membrane protein slr1647 (259 aa).

The next 7 membrane-spanning stretches (helical) occupy residues 4–24, 34–54, 55–75, 98–118, 128–148, 195–215, and 225–245; these read ALIE…GAAI, LTGQ…VVGY, FLAV…LAIM, LWLS…VVII, YLIP…SLAG, MMVV…LAGG, and ILIM…VTAT.

The protein belongs to the UPF0014 family.

Its subcellular location is the cell membrane. This chain is UPF0014 membrane protein slr1647, found in Synechocystis sp. (strain ATCC 27184 / PCC 6803 / Kazusa).